A 308-amino-acid chain; its full sequence is Staphylococcal superantigen-like 4 (308 aa).

Residues 1–30 (MKITTIAKTSLALGLLTTGVITTTTQAANA) form the signal peptide. A disordered region spans residues 28-117 (ANATTPSSTK…TTKQVPTEIN (90 aa)). Composition is skewed to polar residues over residues 33-47 (PSSTKVEAPQSTPPS) and 55-76 (SKPNATTPPSTKVEAPQQTANA). Residues 77-93 (TTPPSTKVTTPPSTNTP) show a composition bias toward low complexity. The span at 94-114 (QPMQSTKSDTPQSPTTKQVPT) shows a compositional bias: polar residues. The tract at residues 180-278 (VDVFVVLEEN…VIKMKNGGKY (99 aa)) is sialyl Lewis X-binding.

It belongs to the staphylococcal/streptococcal toxin family.

It is found in the secreted. Secreted protein that plays a role in immune innate response inhibition by interfering with host TLR2-mediated pathway. This is Staphylococcal superantigen-like 4 from Staphylococcus aureus (strain Newman).